Here is a 138-residue protein sequence, read N- to C-terminus: Large ribosomal subunit protein bL19 (138 aa).

The protein belongs to the bacterial ribosomal protein bL19 family.

In terms of biological role, this protein is located at the 30S-50S ribosomal subunit interface and may play a role in the structure and function of the aminoacyl-tRNA binding site. This chain is Large ribosomal subunit protein bL19, found in Rickettsia peacockii (strain Rustic).